Here is a 305-residue protein sequence, read N- to C-terminus: Ribosomal RNA small subunit methyltransferase H (305 aa).

S-adenosyl-L-methionine-binding positions include 47–49 (GGH), Asp66, Phe93, Asp108, and Gln115. The disordered stretch occupies residues 279 to 305 (ADSNEKLNNPRSRSAKLRLAKKRNPNE). Basic residues predominate over residues 291–305 (RSAKLRLAKKRNPNE).

This sequence belongs to the methyltransferase superfamily. RsmH family.

It is found in the cytoplasm. The catalysed reaction is cytidine(1402) in 16S rRNA + S-adenosyl-L-methionine = N(4)-methylcytidine(1402) in 16S rRNA + S-adenosyl-L-homocysteine + H(+). Its function is as follows. Specifically methylates the N4 position of cytidine in position 1402 (C1402) of 16S rRNA. This is Ribosomal RNA small subunit methyltransferase H from Prochlorococcus marinus (strain SARG / CCMP1375 / SS120).